A 231-amino-acid chain; its full sequence is NAD(+) ADP-ribosyltransferase (231 aa).

It catalyses the reaction NAD(+) + (ADP-D-ribosyl)n-acceptor = nicotinamide + (ADP-D-ribosyl)n+1-acceptor + H(+).. Activity increases up to 5-6 times with Mg(2+) at 50 uM or higher ion concentration. 3-aminobenzamide (3-ABA) inhibits the activity by up to half and nicotinamide to a lesser extent. Zn(2+) inhibits the activity to half-maximal rate but at 500 uM concentration of the ion. In terms of biological role, catalyzes auto- and hetero-ADP ribosylation and produces short oligomers by elongating the ADP-ribose chain (up to 6-mer). Binds DNA non-specifically but with high affinity. Forms very stable complexes with circular DNA wherein the circular DNA confers thermostability compared to linear DNA. This chain is NAD(+) ADP-ribosyltransferase, found in Saccharolobus solfataricus (Sulfolobus solfataricus).